The following is a 455-amino-acid chain: Maintenance of telomere capping protein 1 (455 aa).

Disordered regions lie at residues 1–113 (MAET…SATP) and 296–317 (AKKM…EDAS). Residues 27–38 (PTSKEFNNDDSK) show a composition bias toward basic and acidic residues. Residues 80-113 (VAATSNERQQHDASNQPSQAAQTTINKNTESATP) show a composition bias toward polar residues. Basic and acidic residues predominate over residues 296–305 (AKKMNKENKQ).

The protein belongs to the MTC1 family.

Its subcellular location is the cytoplasm. In terms of biological role, involved in telomere capping. In Schizosaccharomyces pombe (strain 972 / ATCC 24843) (Fission yeast), this protein is Maintenance of telomere capping protein 1.